The chain runs to 260 residues: tRNA pseudouridine synthase C (260 aa).

D54 is an active-site residue.

It belongs to the pseudouridine synthase RluA family.

The enzyme catalyses uridine(65) in tRNA = pseudouridine(65) in tRNA. Responsible for synthesis of pseudouridine from uracil-65 in transfer RNAs. This chain is tRNA pseudouridine synthase C (truC), found in Salmonella typhimurium (strain LT2 / SGSC1412 / ATCC 700720).